The primary structure comprises 513 residues: Probable helicase MJ1565 (513 aa).

Residues R151, 160–165 (GMGKSN), and 467–468 (KV) each bind ATP.

It belongs to the HerA family.

It carries out the reaction Couples ATP hydrolysis with the unwinding of duplex DNA at the replication fork by translocating in the 5'-3' direction. This creates two antiparallel DNA single strands (ssDNA). The leading ssDNA polymer is the template for DNA polymerase III holoenzyme which synthesizes a continuous strand.. It catalyses the reaction ATP + H2O = ADP + phosphate + H(+). The catalysed reaction is Couples ATP hydrolysis with the unwinding of duplex DNA by translocating in the 3'-5' direction.. Its function is as follows. A probably bidirectional DNA helicase. The chain is Probable helicase MJ1565 from Methanocaldococcus jannaschii (strain ATCC 43067 / DSM 2661 / JAL-1 / JCM 10045 / NBRC 100440) (Methanococcus jannaschii).